A 471-amino-acid polypeptide reads, in one-letter code: Serine/threonine-protein kinase sid1 (471 aa).

One can recognise a Protein kinase domain in the interval 9–260 (YTLLRKLGSG…AKELLQHPFI (252 aa)). ATP contacts are provided by residues 15–23 (LGSGSFGVV) and Lys-38. Asp-129 acts as the Proton acceptor in catalysis.

The protein belongs to the protein kinase superfamily. STE Ser/Thr protein kinase family. STE20 subfamily. In terms of assembly, interacts with cdc14.

It is found in the cytoplasm. It localises to the cytoskeleton. Its subcellular location is the microtubule organizing center. The protein resides in the spindle pole body. The catalysed reaction is L-seryl-[protein] + ATP = O-phospho-L-seryl-[protein] + ADP + H(+). It catalyses the reaction L-threonyl-[protein] + ATP = O-phospho-L-threonyl-[protein] + ADP + H(+). Functionally, has a role in the septation initiation network (SIN) required for cytokinesis. The sequence is that of Serine/threonine-protein kinase sid1 (sid1) from Schizosaccharomyces pombe (strain 972 / ATCC 24843) (Fission yeast).